A 193-amino-acid polypeptide reads, in one-letter code: tRNA (cytidine(56)-2'-O)-methyltransferase (193 aa).

S-adenosyl-L-methionine is bound by residues Leu-86 and 115–119; that span reads GGEKV.

The protein belongs to the aTrm56 family. As to quaternary structure, homodimer.

It is found in the cytoplasm. The catalysed reaction is cytidine(56) in tRNA + S-adenosyl-L-methionine = 2'-O-methylcytidine(56) in tRNA + S-adenosyl-L-homocysteine + H(+). Functionally, specifically catalyzes the AdoMet-dependent 2'-O-ribose methylation of cytidine at position 56 in tRNAs. The protein is tRNA (cytidine(56)-2'-O)-methyltransferase of Haloquadratum walsbyi (strain DSM 16790 / HBSQ001).